Reading from the N-terminus, the 515-residue chain is 2,3-bisphosphoglycerate-independent phosphoglycerate mutase (515 aa).

Positions 14 and 64 each coordinate Mn(2+). Ser-64 (phosphoserine intermediate) is an active-site residue. Substrate is bound by residues His-125, 155–156 (RD), Arg-187, Arg-193, 263–266 (RADR), and Lys-337. Mn(2+)-binding residues include Asp-404, His-408, Asp-445, His-446, and His-464.

Belongs to the BPG-independent phosphoglycerate mutase family. As to quaternary structure, monomer. Mn(2+) serves as cofactor.

The catalysed reaction is (2R)-2-phosphoglycerate = (2R)-3-phosphoglycerate. The protein operates within carbohydrate degradation; glycolysis; pyruvate from D-glyceraldehyde 3-phosphate: step 3/5. Functionally, catalyzes the interconversion of 2-phosphoglycerate and 3-phosphoglycerate. The polypeptide is 2,3-bisphosphoglycerate-independent phosphoglycerate mutase (Pseudomonas aeruginosa (strain ATCC 15692 / DSM 22644 / CIP 104116 / JCM 14847 / LMG 12228 / 1C / PRS 101 / PAO1)).